We begin with the raw amino-acid sequence, 54 residues long: Putative ankyrin repeat protein RC0701 (54 aa).

The stretch at 17 to 46 is one ANK repeat; that stretch reads SGKTPLDWYSDYNATKIVETLIKNGGNVSS.

The sequence is that of Putative ankyrin repeat protein RC0701 from Rickettsia conorii (strain ATCC VR-613 / Malish 7).